The following is a 228-amino-acid chain: Cytochrome b5 domain-containing protein 1 (228 aa).

Residues 17-83 (RRYFTPSEVA…DPQTRDIRKH (67 aa)) form the Cytochrome b5 heme-binding domain. His-83 is a binding site for heme.

Belongs to the cytochrome b5 family.

It localises to the cytoplasm. It is found in the cytoskeleton. Its subcellular location is the cilium axoneme. Its function is as follows. Radial spoke stalk protein that binds heme under oxidizing conditions. Required for the coordinated beating of multiple cilia maybe by functioning in a redox signaling pathway. This chain is Cytochrome b5 domain-containing protein 1 (Cyb5d1), found in Mus musculus (Mouse).